The chain runs to 255 residues: Ornithine decarboxylase antizyme (255 aa).

It belongs to the ODC antizyme family. Interacts with ODC and thereby sterically blocks ODC homodimerization.

Its function is as follows. Ornithine decarboxylase (ODC) antizyme protein that negatively regulates ODC activity and intracellular polyamine biosynthesis in response to increased intracellular polyamine levels. Binds to ODC monomers, inhibiting the assembly of the functional ODC homodimer, and targets the monomers for ubiquitin-independent proteolytic destruction by the 26S proteasome. This is Ornithine decarboxylase antizyme (OAZ1) from Candida glabrata (strain ATCC 2001 / BCRC 20586 / JCM 3761 / NBRC 0622 / NRRL Y-65 / CBS 138) (Yeast).